Reading from the N-terminus, the 348-residue chain is Sulfate/thiosulfate import ATP-binding protein CysA (348 aa).

In terms of domain architecture, ABC transporter spans 3–237; that stretch reads IEIRNITKSF…PATPFVCQFI (235 aa). 35–42 is an ATP binding site; it reads GPSGCGKT.

This sequence belongs to the ABC transporter superfamily. Sulfate/tungstate importer (TC 3.A.1.6) family. In terms of assembly, the complex is composed of two ATP-binding proteins (CysA), two transmembrane proteins (CysT and CysW) and a solute-binding protein (CysP).

Its subcellular location is the cell inner membrane. The enzyme catalyses sulfate(out) + ATP + H2O = sulfate(in) + ADP + phosphate + H(+). The catalysed reaction is thiosulfate(out) + ATP + H2O = thiosulfate(in) + ADP + phosphate + H(+). Its function is as follows. Part of the ABC transporter complex CysAWTP involved in sulfate/thiosulfate import. Responsible for energy coupling to the transport system. The chain is Sulfate/thiosulfate import ATP-binding protein CysA from Methylococcus capsulatus (strain ATCC 33009 / NCIMB 11132 / Bath).